The sequence spans 362 residues: Histidine biosynthesis bifunctional protein HisB (362 aa).

Residues 1 to 173 (MQPTLFIDRD…TVTNCGKRPP (173 aa)) form a histidinol-phosphatase region. Residue D8 is the Nucleophile of the active site. The Mg(2+) site is built by D8 and D10. The active-site Proton donor is the D10. Zn(2+)-binding residues include C91, H93, C99, and C101. A Mg(2+)-binding site is contributed by D128. The segment at 174–362 (RFAEVIRQTK…NEMPSSKGVL (189 aa)) is imidazoleglycerol-phosphate dehydratase.

This sequence in the N-terminal section; belongs to the histidinol-phosphatase family. The protein in the C-terminal section; belongs to the imidazoleglycerol-phosphate dehydratase family. Mg(2+) is required as a cofactor. Requires Zn(2+) as cofactor.

It is found in the cytoplasm. The enzyme catalyses D-erythro-1-(imidazol-4-yl)glycerol 3-phosphate = 3-(imidazol-4-yl)-2-oxopropyl phosphate + H2O. It carries out the reaction L-histidinol phosphate + H2O = L-histidinol + phosphate. It functions in the pathway amino-acid biosynthesis; L-histidine biosynthesis; L-histidine from 5-phospho-alpha-D-ribose 1-diphosphate: step 6/9. The protein operates within amino-acid biosynthesis; L-histidine biosynthesis; L-histidine from 5-phospho-alpha-D-ribose 1-diphosphate: step 8/9. The protein is Histidine biosynthesis bifunctional protein HisB of Haemophilus influenzae (strain 86-028NP).